Here is a 72-residue protein sequence, read N- to C-terminus: DNA-directed RNA polymerase subunit epsilon (72 aa).

The protein belongs to the RNA polymerase subunit epsilon family. RNAP is composed of a core of 2 alpha, a beta and a beta' subunit. The core is associated with a delta subunit, and at least one of epsilon or omega. When a sigma factor is associated with the core the holoenzyme is formed, which can initiate transcription.

It catalyses the reaction RNA(n) + a ribonucleoside 5'-triphosphate = RNA(n+1) + diphosphate. Its function is as follows. A non-essential component of RNA polymerase (RNAP). The protein is DNA-directed RNA polymerase subunit epsilon of Levilactobacillus brevis (strain ATCC 367 / BCRC 12310 / CIP 105137 / JCM 1170 / LMG 11437 / NCIMB 947 / NCTC 947) (Lactobacillus brevis).